The chain runs to 381 residues: Alkanesulfonate monooxygenase (381 aa).

The protein belongs to the SsuD family. Homotetramer.

It catalyses the reaction an alkanesulfonate + FMNH2 + O2 = an aldehyde + FMN + sulfite + H2O + 2 H(+). In terms of biological role, catalyzes the desulfonation of aliphatic sulfonates. This Shigella flexneri serotype 5b (strain 8401) protein is Alkanesulfonate monooxygenase.